We begin with the raw amino-acid sequence, 1247 residues long: Leucine-rich repeat-containing protein 53 (1247 aa).

LRR repeat units lie at residues 34–55 (TTRV…NLSL), 58–79 (NLAL…ALHG), 82–102 (MLRT…TDHT), 108–129 (SLQV…WFRN), 132–153 (GLTR…SFGG), 158–179 (SLRY…AFRP), and 182–203 (QLQE…FTPL). The 58-residue stretch at 214 to 271 (NQWSCTCDLHPLARFLRNYIKSSAHTLRNAKDLNCQPSTAAVAAAQSVLRLSETNCDS) folds into the LRRCT domain. Residues 294-314 (LLTVLGFAGAVGLTCLGLVVF) traverse the membrane as a helical segment. Disordered regions lie at residues 828–866 (SAGH…EDAT), 887–927 (VLPF…SPRN), and 1223–1247 (ENSA…LETE). 2 stretches are compositionally biased toward polar residues: residues 898–927 (DQGT…SPRN) and 1238–1247 (YATTSPLETE).

The protein localises to the membrane. This chain is Leucine-rich repeat-containing protein 53 (LRRC53), found in Homo sapiens (Human).